The following is a 295-amino-acid chain: Protoheme IX farnesyltransferase (295 aa).

The next 9 helical transmembrane spans lie at 9–29 (ITKP…FFLA), 36–56 (FGVF…GCVF), 80–100 (LVSL…GVGL), 108–128 (LAAL…SLYL), 135–155 (GTLV…CAVS), 163–183 (LTLL…IAIF), 209–229 (IMLY…GGYA), 230–250 (GLNY…MAWK), and 265–285 (FVFS…DFQV).

Belongs to the UbiA prenyltransferase family. Protoheme IX farnesyltransferase subfamily.

The protein localises to the cell inner membrane. The catalysed reaction is heme b + (2E,6E)-farnesyl diphosphate + H2O = Fe(II)-heme o + diphosphate. The protein operates within porphyrin-containing compound metabolism; heme O biosynthesis; heme O from protoheme: step 1/1. In terms of biological role, converts heme B (protoheme IX) to heme O by substitution of the vinyl group on carbon 2 of heme B porphyrin ring with a hydroxyethyl farnesyl side group. The sequence is that of Protoheme IX farnesyltransferase from Pseudomonas syringae pv. syringae (strain B728a).